Reading from the N-terminus, the 562-residue chain is Tissue-type plasminogen activator (562 aa).

Positions methionine 1–cysteine 19 are cleaved as a signal peptide. The propeptide occupies threonine 20 to arginine 32. The propeptide at glycine 33–arginine 35 is removed by plasmin. A Fibronectin type-I domain is found at valine 39 to valine 81. 17 disulfides stabilise this stretch: cysteine 41-cysteine 71, cysteine 69-cysteine 78, cysteine 86-cysteine 97, cysteine 91-cysteine 108, cysteine 110-cysteine 119, cysteine 127-cysteine 208, cysteine 148-cysteine 190, cysteine 179-cysteine 203, cysteine 215-cysteine 296, cysteine 236-cysteine 278, cysteine 267-cysteine 291, cysteine 299-cysteine 430, cysteine 342-cysteine 358, cysteine 350-cysteine 419, cysteine 444-cysteine 519, cysteine 476-cysteine 492, and cysteine 509-cysteine 537. The tract at residues arginine 42–glutamine 52 is important for binding to annexin A2. Residues proline 82 to glutamate 120 enclose the EGF-like domain. Threonine 96 carries O-linked (Fuc) threonine glycosylation. 2 consecutive Kringle domains span residues threonine 126–cysteine 208 and glutamate 214–cysteine 296. The N-linked (GlcNAc...) asparagine glycan is linked to asparagine 152. The 251-residue stretch at isoleucine 311 to arginine 561 folds into the Peptidase S1 domain. Active-site charge relay system residues include histidine 357 and aspartate 406. Asparagine 483 carries N-linked (GlcNAc...) asparagine glycosylation. Serine 513 acts as the Charge relay system in catalysis.

The protein belongs to the peptidase S1 family. In terms of assembly, heterodimer of chain A and chain B held by a disulfide bond. Binds to fibrin with high affinity. This interaction leads to an increase in the catalytic efficiency of the enzyme due to an increase in affinity for plasminogen. Similarly, binding to heparin increases the activation of plasminogen. Binds to annexin A2, cytokeratin-8, fibronectin and laminin. Binds to mannose receptor and the low-density lipoprotein receptor-related protein (LRP1); these proteins are involved in TPA clearance. Binds LRP1B; binding is followed by internalization and degradation. Forms heterodimer with SERPINA5. Interacts with SERPINE1. In complex with SERPINE1, interacts with SORL1. Post-translationally, the single chain, almost fully active enzyme, can be further processed into a two-chain fully active form by a cleavage after Arg-310 catalyzed by plasmin, tissue kallikrein or factor Xa.

The protein localises to the secreted. It localises to the extracellular space. It catalyses the reaction Specific cleavage of Arg-|-Val bond in plasminogen to form plasmin.. Inhibited by SERPINA5. Inhibited by SERPINE1. Its function is as follows. Converts the abundant, but inactive, zymogen plasminogen to plasmin by hydrolyzing a single Arg-Val bond in plasminogen. By controlling plasmin-mediated proteolysis, it plays an important role in tissue remodeling and degradation, in cell migration and many other physiopathological events. During oocyte activation, plays a role in cortical granule reaction in the zona reaction, which contributes to the block to polyspermy. The chain is Tissue-type plasminogen activator (PLAT) from Sus scrofa (Pig).